Here is a 160-residue protein sequence, read N- to C-terminus: Secreted RxLR effector protein 83 (160 aa).

The N-terminal stretch at 1 to 21 is a signal peptide; it reads MLVLLAATFFIYISRLTSTDA. A RxLR motif is present at residues 27–30; the sequence is RGLR. 2 N-linked (GlcNAc...) asparagine glycosylation sites follow: Asn-39 and Asn-131.

The protein belongs to the RxLR effector family.

The protein resides in the secreted. Its subcellular location is the host nucleus. The protein localises to the host cytoplasm. Secreted effector that completely suppresses the host cell death induced by cell death-inducing proteins. The chain is Secreted RxLR effector protein 83 from Plasmopara viticola (Downy mildew of grapevine).